Reading from the N-terminus, the 59-residue chain is Large ribosomal subunit protein uL30 (59 aa).

The protein belongs to the universal ribosomal protein uL30 family. As to quaternary structure, part of the 50S ribosomal subunit.

This Clostridium beijerinckii (strain ATCC 51743 / NCIMB 8052) (Clostridium acetobutylicum) protein is Large ribosomal subunit protein uL30.